A 494-amino-acid polypeptide reads, in one-letter code: Alpha-amylase-related protein (494 aa).

The N-terminal stretch at 1 to 20 (MIKFALALTLCLAGASLSLA) is a signal peptide. Pyrrolidone carboxylic acid is present on glutamine 21. A disulfide bridge connects residues cysteine 48 and cysteine 104. Ca(2+) contacts are provided by asparagine 118, glutamine 169, and aspartate 178. Cysteine 157 and cysteine 171 are joined by a disulfide. Residue arginine 206 coordinates chloride. Aspartate 208 functions as the Nucleophile in the catalytic mechanism. Histidine 212 is a Ca(2+) binding site. Catalysis depends on glutamate 245, which acts as the Proton donor. Chloride is bound by residues asparagine 308 and arginine 343. 3 disulfide bridges follow: cysteine 376–cysteine 382, cysteine 418–cysteine 441, and cysteine 448–cysteine 460.

Belongs to the glycosyl hydrolase 13 family. As to quaternary structure, monomer. The cofactor is Ca(2+). Chloride serves as cofactor.

Its subcellular location is the secreted. It catalyses the reaction Endohydrolysis of (1-&gt;4)-alpha-D-glucosidic linkages in polysaccharides containing three or more (1-&gt;4)-alpha-linked D-glucose units.. In Drosophila lini (Fruit fly), this protein is Alpha-amylase-related protein (Amyrel).